Here is a 494-residue protein sequence, read N- to C-terminus: PIGF/3-ketodihydrosphingosine reductase fusion protein (494 aa).

NADPH-binding residues include Gly20, Ser22, and Gly24. Positions 20-24 (GGSQG) match the GXSXG motif. Residue Leu25 participates in NADP(+) binding. Residues Arg45 and Lys49 each contribute to the NADPH site. Residue Val54 participates in NADP(+) binding. NADPH-binding residues include Asp74 and Leu75. A helical membrane pass occupies residues 148–168 (ILLVGSLLSSLPIIGYSAYSP). NADP(+) contacts are provided by Tyr166, Lys170, and Ile199. Tyr166 (proton acceptor) is an active-site residue. The active-site Lowers pKa of active site Tyr is the Lys170. Transmembrane regions (helical) follow at residues 264-284 (HDNPILEYLFALVSLLAWPFY), 312-332 (IFTLLLTFTQLTIFYLSLNCL), 370-390 (LAGAASMLIGSLLISFILVAF), 402-422 (YFCALTLSVFTVYPLASTLAF), 444-464 (LRSWGPIIGAWFGAFPIPLDW), and 473-493 (ITIVIGAFLGYAFAAIVGEIL).

The protein in the N-terminal section; belongs to the short-chain dehydrogenases/reductases (SDR) family. This sequence in the C-terminal section; belongs to the PIGF family.

The protein localises to the endoplasmic reticulum membrane. The catalysed reaction is sphinganine + NADP(+) = 3-oxosphinganine + NADPH + H(+). Its pathway is glycolipid biosynthesis; glycosylphosphatidylinositol-anchor biosynthesis. It participates in lipid metabolism; sphingolipid metabolism. Acts in the GPI biosynthetic pathway between GlcNAc-PI synthesis and GPI transfer to protein. Required for the formation of complete GPI precursors CP1 and CP2. Its function is as follows. Catalyzes the reduction of 3'-oxosphinganine (3-ketodihydrosphingosine/KDS) to sphinganine (dihydrosphingosine/DHS), the second step of de novo sphingolipid biosynthesis. This is PIGF/3-ketodihydrosphingosine reductase fusion protein from Schizosaccharomyces pombe (strain 972 / ATCC 24843) (Fission yeast).